Reading from the N-terminus, the 423-residue chain is Gamma-glutamyl phosphate reductase (423 aa).

The protein belongs to the gamma-glutamyl phosphate reductase family.

Its subcellular location is the cytoplasm. It carries out the reaction L-glutamate 5-semialdehyde + phosphate + NADP(+) = L-glutamyl 5-phosphate + NADPH + H(+). It participates in amino-acid biosynthesis; L-proline biosynthesis; L-glutamate 5-semialdehyde from L-glutamate: step 2/2. In terms of biological role, catalyzes the NADPH-dependent reduction of L-glutamate 5-phosphate into L-glutamate 5-semialdehyde and phosphate. The product spontaneously undergoes cyclization to form 1-pyrroline-5-carboxylate. The polypeptide is Gamma-glutamyl phosphate reductase (Burkholderia vietnamiensis (strain G4 / LMG 22486) (Burkholderia cepacia (strain R1808))).